A 295-amino-acid polypeptide reads, in one-letter code: MQIRMTEYQVPDPESGPYGITVCANGRIWFTEQKGNRIGMLTESGDITEYTIPTESAGASIITSGIDGELWFTEYKAGKIGKITPQGKITEYALPPGAAPFGIAAGCDDAMWYTDMAGHQIGRLSSSGEITEYKLPKPGAFPSFITRGADGALWFTQNQSGSIGRITADGDISEYPLPQEQSGPVGITAGPDGALWFTEINANQIGRITVSGKISEYQLPTAHARPHAIAAGGDGALWFTEWGAGQIGRITVDGDITEYPIPTADSEPHGIAAGSAHSIWFAEECGRIGKISIQN.

His-227 contacts substrate. Position 267 (Glu-267) interacts with Mg(2+). Residue His-269 is the Proton acceptor of the active site. Glu-284 provides a ligand contact to Mg(2+).

It belongs to the Vgb family. As to quaternary structure, monomer. Mg(2+) serves as cofactor.

Functionally, inactivates the type B streptogramin antibiotics by linearizing the lactone ring at the ester linkage, generating a free phenylglycine carboxylate and converting the threonyl moiety into 2-amino-butenoic acid. The chain is Virginiamycin B lyase from Bacillus licheniformis (strain ATCC 14580 / DSM 13 / JCM 2505 / CCUG 7422 / NBRC 12200 / NCIMB 9375 / NCTC 10341 / NRRL NRS-1264 / Gibson 46).